Here is a 116-residue protein sequence, read N- to C-terminus: S-adenosylmethionine decarboxylase proenzyme (116 aa).

The active-site Schiff-base intermediate with substrate; via pyruvic acid is Ser63. Ser63 carries the pyruvic acid (Ser); by autocatalysis modification. Catalysis depends on His68, which acts as the Proton acceptor; for processing activity. Residue Cys83 is the Proton donor; for catalytic activity of the active site.

It belongs to the prokaryotic AdoMetDC family. Type 1 subfamily. In terms of assembly, heterotetramer of two alpha and two beta chains arranged as a dimer of alpha/beta heterodimers. Requires pyruvate as cofactor. Is synthesized initially as an inactive proenzyme. Formation of the active enzyme involves a self-maturation process in which the active site pyruvoyl group is generated from an internal serine residue via an autocatalytic post-translational modification. Two non-identical subunits are generated from the proenzyme in this reaction, and the pyruvate is formed at the N-terminus of the alpha chain, which is derived from the carboxyl end of the proenzyme. The post-translation cleavage follows an unusual pathway, termed non-hydrolytic serinolysis, in which the side chain hydroxyl group of the serine supplies its oxygen atom to form the C-terminus of the beta chain, while the remainder of the serine residue undergoes an oxidative deamination to produce ammonia and the pyruvoyl group blocking the N-terminus of the alpha chain.

It catalyses the reaction S-adenosyl-L-methionine + H(+) = S-adenosyl 3-(methylsulfanyl)propylamine + CO2. Its pathway is amine and polyamine biosynthesis; S-adenosylmethioninamine biosynthesis; S-adenosylmethioninamine from S-adenosyl-L-methionine: step 1/1. Its function is as follows. Catalyzes the decarboxylation of S-adenosylmethionine to S-adenosylmethioninamine (dcAdoMet), the propylamine donor required for the synthesis of the polyamines spermine and spermidine from the diamine putrescine. The sequence is that of S-adenosylmethionine decarboxylase proenzyme from Clostridium botulinum (strain 657 / Type Ba4).